Consider the following 430-residue polypeptide: Dihydrofolate synthase/folylpolyglutamate synthase (430 aa).

51–54 (GKGS) contributes to the ATP binding site. Serine 75 is a Mg(2+) binding site. 114–117 (TEYG) contacts 7,8-dihydropteroate. Glutamate 145 is a binding site for Mg(2+). Position 152 to 154 (152 to 154 (FDS)) interacts with 7,8-dihydropteroate. Histidine 172 serves as a coordination point for Mg(2+). Positions 263, 302, and 315 each coordinate ATP.

It belongs to the folylpolyglutamate synthase family. As to quaternary structure, monomer. Mg(2+) is required as a cofactor.

It catalyses the reaction 7,8-dihydropteroate + L-glutamate + ATP = 7,8-dihydrofolate + ADP + phosphate + H(+). The catalysed reaction is (6S)-5,6,7,8-tetrahydrofolyl-(gamma-L-Glu)(n) + L-glutamate + ATP = (6S)-5,6,7,8-tetrahydrofolyl-(gamma-L-Glu)(n+1) + ADP + phosphate + H(+). It functions in the pathway cofactor biosynthesis; tetrahydrofolate biosynthesis; 7,8-dihydrofolate from 2-amino-4-hydroxy-6-hydroxymethyl-7,8-dihydropteridine diphosphate and 4-aminobenzoate: step 2/2. It participates in cofactor biosynthesis; tetrahydrofolylpolyglutamate biosynthesis. In terms of biological role, functions in two distinct reactions of the de novo folate biosynthetic pathway. Catalyzes the addition of a glutamate residue to dihydropteroate (7,8-dihydropteroate or H2Pte) to form dihydrofolate (7,8-dihydrofolate monoglutamate or H2Pte-Glu). Also catalyzes successive additions of L-glutamate to tetrahydrofolate, leading to folylpolyglutamate derivatives. The polypeptide is Dihydrofolate synthase/folylpolyglutamate synthase (folC) (Bacillus subtilis (strain 168)).